A 255-amino-acid polypeptide reads, in one-letter code: Folate receptor alpha (255 aa).

A signal peptide spans methionine 1–alanine 24. 8 cysteine pairs are disulfide-bonded: cysteine 35–cysteine 63, cysteine 55–cysteine 103, cysteine 64–cysteine 107, cysteine 87–cysteine 173, cysteine 94–cysteine 144, cysteine 133–cysteine 207, cysteine 137–cysteine 187, and cysteine 150–cysteine 167. The N-linked (GlcNAc...) asparagine glycan is linked to asparagine 67. Residues aspartate 101, tyrosine 105, tryptophan 122–arginine 126, histidine 155–tryptophan 160, and serine 194 contribute to the folate site. Asparagine 159 is a glycosylation site (N-linked (GlcNAc...) asparagine). Asparagine 199 carries N-linked (GlcNAc...) asparagine glycosylation. A lipid anchor (GPI-anchor amidated serine) is attached at serine 232. A propeptide spans glycine 233 to serine 255 (removed in mature form).

Belongs to the folate receptor family. Post-translationally, the secreted form is derived from the membrane-bound form either by cleavage of the GPI anchor, or/and by proteolysis catalyzed by a metalloprotease. As to expression, detected in kidney proximal tubules (at protein level).

It is found in the cell membrane. It localises to the apical cell membrane. The protein localises to the basolateral cell membrane. Its subcellular location is the secreted. The protein resides in the cytoplasmic vesicle. It is found in the clathrin-coated vesicle. It localises to the endosome. In terms of biological role, binds to folate and reduced folic acid derivatives and mediates delivery of 5-methyltetrahydrofolate and folate analogs into the interior of cells. Has high affinity for folate and folic acid analogs at neutral pH. Exposure to slightly acidic pH after receptor endocytosis triggers a conformation change that strongly reduces its affinity for folates and mediates their release. Required for normal embryonic development and normal cell proliferation. Required for renal folate reabsorption. This Mus musculus (Mouse) protein is Folate receptor alpha (Folr1).